A 320-amino-acid chain; its full sequence is Malate dehydrogenase (320 aa).

Residues 10–15 (GAGNIG) and Asp-34 each bind NAD(+). Residues Arg-83 and Arg-89 each contribute to the substrate site. Residues Asn-96 and 119–121 (ITN) contribute to the NAD(+) site. Substrate is bound by residues Asn-121 and Arg-152. His-176 serves as the catalytic Proton acceptor.

Belongs to the LDH/MDH superfamily. MDH type 3 family.

The catalysed reaction is (S)-malate + NAD(+) = oxaloacetate + NADH + H(+). Catalyzes the reversible oxidation of malate to oxaloacetate. This Sphingopyxis alaskensis (strain DSM 13593 / LMG 18877 / RB2256) (Sphingomonas alaskensis) protein is Malate dehydrogenase.